Reading from the N-terminus, the 205-residue chain is uncharacterized protein (205 aa).

3 consecutive transmembrane segments (helical) span residues 45–65 (LFFY…FLVI), 119–139 (VFWL…VTAF), and 144–164 (FEWM…LWGY).

It belongs to the TVP23 family.

The protein resides in the membrane. This is an uncharacterized protein from Caenorhabditis elegans.